Reading from the N-terminus, the 464-residue chain is Lysosomal dipeptide transporter MFSD1 (464 aa).

Residues 11–12 (LL) carry the Dileucine internalization motif motif. Phosphoserine is present on Ser20. 12 helical membrane passes run 38–58 (LAHR…SYFC), 82–102 (LLYA…GFLI), 112–132 (TVIF…GGIF), 134–154 (AFWL…SLAV), 190–210 (LMGW…HMTL), 214–234 (LMIG…LAYL), 265–285 (LILV…FIGL), 303–323 (AINS…GLLV), 330–350 (IIWV…LAFT), 360–380 (LLGF…AFIV), 391–411 (FMQS…GMIL), and 417–437 (LLLE…VVCL).

The protein belongs to the major facilitator superfamily. As to quaternary structure, homodimer. Interacts with lysosomal protein GLMP (via lumenal domain); the interaction starts while both proteins are still in the endoplasmic reticulum and is required for stabilization of MFSD1 in lysosomes but has no direct effect on its targeting to lysosomes or transporter activity. In terms of processing, not N-glycosylated. In brain, expressed in the cortex, striatum hippocampus, hypothalamus, thalamus and brainstem (at protein level). Widely expressed with highest levels in kidney and spleen (at protein level).

Its subcellular location is the lysosome membrane. The enzyme catalyses L-alpha-aminoacyl-L-arginine(out) = L-alpha-aminoacyl-L-arginine(in). It carries out the reaction L-arginyl-L-alpha-amino acid(out) = L-arginyl-L-alpha-amino acid(in). The catalysed reaction is L-arginyl-glycine(out) = L-arginyl-glycine(in). It catalyses the reaction L-alpha-aminoacyl-L-lysine(out) = L-alpha-aminoacyl-L-lysine(in). The enzyme catalyses L-aspartyl-L-lysine(out) = L-aspartyl-L-lysine(in). It carries out the reaction L-alanyl-L-lysine(out) = L-alanyl-L-lysine(in). The catalysed reaction is L-lysyl-L-alpha-amino acid(out) = L-lysyl-L-alpha-amino acid(in). It catalyses the reaction L-lysyl-L-alanine(out) = L-lysyl-L-alanine(in). The enzyme catalyses L-lysyl-L-lysine(out) = L-lysyl-L-lysine(in). It carries out the reaction L-lysyl-glycine(out) = L-lysyl-glycine(in). The catalysed reaction is L-alpha-aminoacyl-L-histidine(out) = L-alpha-aminoacyl-L-histidine(in). It catalyses the reaction L-histidyl-L-alpha-amino acid(out) = L-histidyl-L-alpha-amino acid(in). The enzyme catalyses L-histidyl-glycine(out) = L-histidyl-glycine(in). In terms of biological role, lysosomal dipeptide uniporter that selectively exports lysine, arginine or histidine-containing dipeptides with a net positive charge from the lysosome lumen into the cytosol. Could play a role in a specific type of protein O-glycosylation indirectly regulating macrophages migration and tissue invasion. Also essential for liver homeostasis. This chain is Lysosomal dipeptide transporter MFSD1, found in Mus musculus (Mouse).